The following is a 701-amino-acid chain: E3 ubiquitin-protein ligase RNF19B (701 aa).

The disordered stretch occupies residues 1 to 97; sequence MGSEKDSESP…PAEPLSTSQA (97 aa). Positions 1–304 are required for ubiquitin ligase activity and for protection against staurosporin-induced cell death; it reads MGSEKDSESP…VCGCEFCWLC (304 aa). Residues 57–72 show a composition bias toward low complexity; it reads QQLHQQQQIQQQQLLQ. A TRIAD supradomain region spans residues 103–323; the sequence is ELLECPLCLV…LSPSGCTFWG (221 aa). Positions 107, 110, 130, 133, 194, 199, 216, 221, 226, 229, 234, 239, 273, and 276 each coordinate Zn(2+). The segment at 107-156 adopts an RING-type 1 zinc-finger fold; sequence CPLCLVRQPAEQLPELQGCSHRSCLCCLRQYLRIEITESRVQLSCPECAE. The IBR-type zinc-finger motif lies at 174-239; the sequence is EKYEEFLLRR…KQAWHPNQTC (66 aa). The segment at 273-304 adopts an RING-type 2; atypical zinc-finger fold; it reads CPRCGAYIIKMNDGSCNHMTCAVCGCEFCWLC. Cys288 is an active-site residue. Zn(2+) is bound by residues Cys293, Cys296, Cys301, Cys304, His312, and Cys319. The next 2 helical transmembrane spans lie at 340 to 360 and 396 to 416; these read LIGA…AMVI and IITA…IMLA. Disordered regions lie at residues 472–495 and 658–677; these read LEGA…PGGL and AELT…HGAP.

The protein belongs to the RBR family. RNF19 subfamily. Interacts with UBE2L3, UBE2L6 and UCKL1.

It is found in the cytoplasmic granule membrane. Its subcellular location is the endoplasmic reticulum membrane. The enzyme catalyses [E2 ubiquitin-conjugating enzyme]-S-ubiquitinyl-L-cysteine + [acceptor protein]-L-lysine = [E2 ubiquitin-conjugating enzyme]-L-cysteine + [acceptor protein]-N(6)-ubiquitinyl-L-lysine.. It participates in protein modification; protein ubiquitination. Functionally, E3 ubiquitin-protein ligase which accepts ubiquitin from E2 ubiquitin-conjugating enzymes UBE2L3 and UBE2L6 in the form of a thioester and then directly transfers the ubiquitin to targeted substrates, such as UCKL1. Involved in the cytolytic activity of natural killer cells and cytotoxic T-cells. Protects against staurosporin-induced cell death. This chain is E3 ubiquitin-protein ligase RNF19B (rnf19b), found in Danio rerio (Zebrafish).